A 249-amino-acid polypeptide reads, in one-letter code: DNA repair protein RecO (249 aa).

This sequence belongs to the RecO family.

Functionally, involved in DNA repair and RecF pathway recombination. This is DNA repair protein RecO from Exiguobacterium sp. (strain ATCC BAA-1283 / AT1b).